The following is a 244-amino-acid chain: uncharacterized protein (244 aa).

Residues 1-11 (MSRRSRSRSRS) are compositionally biased toward basic residues. Disordered stretches follow at residues 1–104 (MSRR…TLNE) and 213–244 (ARQK…KFGK). The segment covering 12–31 (PKRDREERKRREDRDRDRER) has biased composition (basic and acidic residues). Residues 32 to 46 (KRDRKDRERKRRHRS) are compositionally biased toward basic residues. Residues 63-75 (FREERRRRERNES) are compositionally biased toward basic and acidic residues. Pro residues predominate over residues 77–89 (KLPPPPPPPPSDP). Residues 213 to 223 (ARQKSDMKKNE) are compositionally biased toward basic and acidic residues. The span at 224–234 (QQAILNKSGNS) shows a compositional bias: polar residues.

This is an uncharacterized protein from Caenorhabditis elegans.